The sequence spans 213 residues: Orotate phosphoribosyltransferase (213 aa).

Lysine 26 contributes to the 5-phospho-alpha-D-ribose 1-diphosphate binding site. Position 34–35 (34–35) interacts with orotate; the sequence is FF. 5-phospho-alpha-D-ribose 1-diphosphate contacts are provided by residues 72–73, arginine 99, lysine 100, lysine 103, histidine 105, and 124–132; these read YK and DDVITAGTA. Orotate is bound by residues threonine 128 and arginine 156.

The protein belongs to the purine/pyrimidine phosphoribosyltransferase family. PyrE subfamily. Homodimer. It depends on Mg(2+) as a cofactor.

The enzyme catalyses orotidine 5'-phosphate + diphosphate = orotate + 5-phospho-alpha-D-ribose 1-diphosphate. The protein operates within pyrimidine metabolism; UMP biosynthesis via de novo pathway; UMP from orotate: step 1/2. Its function is as follows. Catalyzes the transfer of a ribosyl phosphate group from 5-phosphoribose 1-diphosphate to orotate, leading to the formation of orotidine monophosphate (OMP). The protein is Orotate phosphoribosyltransferase of Klebsiella pneumoniae (strain 342).